Here is a 496-residue protein sequence, read N- to C-terminus: Lysine--tRNA ligase (496 aa).

Mg(2+) is bound by residues E408 and E415.

This sequence belongs to the class-II aminoacyl-tRNA synthetase family. Homodimer. The cofactor is Mg(2+).

The protein localises to the cytoplasm. It carries out the reaction tRNA(Lys) + L-lysine + ATP = L-lysyl-tRNA(Lys) + AMP + diphosphate. This is Lysine--tRNA ligase from Legionella pneumophila (strain Corby).